The sequence spans 286 residues: Pantothenate synthetase (286 aa).

Position 31–38 (31–38 (MGALHDGH)) interacts with ATP. Histidine 38 serves as the catalytic Proton donor. (R)-pantoate is bound at residue glutamine 62. Glutamine 62 is a beta-alanine binding site. Position 148–151 (148–151 (GKKD)) interacts with ATP. Residue glutamine 154 coordinates (R)-pantoate. Residues valine 177 and 185-188 (KSSR) each bind ATP.

It belongs to the pantothenate synthetase family. In terms of assembly, homodimer.

The protein localises to the cytoplasm. It carries out the reaction (R)-pantoate + beta-alanine + ATP = (R)-pantothenate + AMP + diphosphate + H(+). Its pathway is cofactor biosynthesis; (R)-pantothenate biosynthesis; (R)-pantothenate from (R)-pantoate and beta-alanine: step 1/1. In terms of biological role, catalyzes the condensation of pantoate with beta-alanine in an ATP-dependent reaction via a pantoyl-adenylate intermediate. This chain is Pantothenate synthetase, found in Staphylococcus carnosus (strain TM300).